The primary structure comprises 929 residues: Type I restriction enzyme SauCOLORF180P endonuclease subunit (929 aa).

One can recognise a Helicase ATP-binding domain in the interval 254-418 (QQATETGNNG…DGRTTADIFG (165 aa)). 268 to 274 (TTGSGKT) contacts ATP.

It belongs to the HsdR family. The type I restriction/modification system is composed of three polypeptides R, M and S.

The catalysed reaction is Endonucleolytic cleavage of DNA to give random double-stranded fragments with terminal 5'-phosphates, ATP is simultaneously hydrolyzed.. The restriction (R) subunit of a type I restriction enzyme that recognizes an undetermined sequence and cleaves a random distance away. Subunit R is required for both nuclease and ATPase activities, but not for modification. After locating a non-methylated recognition site, the enzyme complex serves as a molecular motor that translocates DNA in an ATP-dependent manner until a collision occurs that triggers cleavage. This is Type I restriction enzyme SauCOLORF180P endonuclease subunit from Staphylococcus aureus (strain COL).